We begin with the raw amino-acid sequence, 339 residues long: MRVYYDRDADVNLIKSKKVVIVGYGSQGRAHALNLKDSGAANVRVALREGSATVQKAQADGFEVMNVADAAKWADLMMMATPDELQADIYRDHIHNNLRDGAAIAFAHGLNVHCGLIEPKKTVDVVMIAPKGPGHTVRGEYQKGGGVPCLIAIHQDASGNAHDLALSYASGVGGGRSGVIETTFKEECETDLFGEQAVLCGGVVELIRTGFEVLVEAGYAPEMAYFECLNEMKLIVDLIYEGGIANMNYSISNTAEWGEYVTGPRIITAETKAEMKRVLKDIQTGKFTSDWMQEWKAGAARFKGIRRLNDAHQIEEVGGKLRAMMPWIEKNKLVDKARN.

The region spanning 1–182 (MRVYYDRDAD…GGGRSGVIET (182 aa)) is the KARI N-terminal Rossmann domain. Residues 24–27 (YGSQ), Arg48, Ser51, Thr53, and 83–86 (DELQ) contribute to the NADP(+) site. His108 is a catalytic residue. NADP(+) is bound at residue Gly134. The region spanning 183–328 (TFKEECETDL…GKLRAMMPWI (146 aa)) is the KARI C-terminal knotted domain. Residues Asp191, Glu195, Glu227, and Glu231 each coordinate Mg(2+). Ser252 serves as a coordination point for substrate.

It belongs to the ketol-acid reductoisomerase family. Mg(2+) serves as cofactor.

The catalysed reaction is (2R)-2,3-dihydroxy-3-methylbutanoate + NADP(+) = (2S)-2-acetolactate + NADPH + H(+). It carries out the reaction (2R,3R)-2,3-dihydroxy-3-methylpentanoate + NADP(+) = (S)-2-ethyl-2-hydroxy-3-oxobutanoate + NADPH + H(+). Its pathway is amino-acid biosynthesis; L-isoleucine biosynthesis; L-isoleucine from 2-oxobutanoate: step 2/4. It participates in amino-acid biosynthesis; L-valine biosynthesis; L-valine from pyruvate: step 2/4. Functionally, involved in the biosynthesis of branched-chain amino acids (BCAA). Catalyzes an alkyl-migration followed by a ketol-acid reduction of (S)-2-acetolactate (S2AL) to yield (R)-2,3-dihydroxy-isovalerate. In the isomerase reaction, S2AL is rearranged via a Mg-dependent methyl migration to produce 3-hydroxy-3-methyl-2-ketobutyrate (HMKB). In the reductase reaction, this 2-ketoacid undergoes a metal-dependent reduction by NADPH to yield (R)-2,3-dihydroxy-isovalerate. This chain is Ketol-acid reductoisomerase (NADP(+)), found in Brucella abortus (strain S19).